The chain runs to 307 residues: Cyclin-dependent kinase 5 activator 1 (307 aa).

Residue glycine 2 is the site of N-myristoyl glycine attachment. Position 8 is a phosphoserine; by CDK5 (serine 8). The interval 97 to 133 is disordered; the sequence is TFAQPPPAQPPAPPASQLSGSQTGVSSSVKKAPHPAI. A compositionally biased stretch (pro residues) spans 100–110; sequence QPPPAQPPAPP. The segment covering 112–125 has biased composition (polar residues); sequence SQLSGSQTGVSSSV. Threonine 138 carries the post-translational modification Phosphothreonine; by CDK5.

Belongs to the cyclin-dependent kinase 5 activator family. Heterodimer composed of a catalytic subunit CDK5 and a regulatory subunit CDK5R1 (p25) and macromolecular complex composed of at least CDK5, CDK5R1 (p35) and CDK5RAP1 or CDK5RAP2 or CDK5RAP3. Only the heterodimer shows kinase activity. Interacts with EPHA4 and NGEF; may mediate the activation of NGEF by EPHA4. Interacts with RASGRF2. The complex p35/CDK5 interacts with CLOCK. In terms of processing, the p35 form is proteolytically cleaved by calpain, giving rise to the p25 form. P35 has a 5 to 10 fold shorter half-life compared to p25. The conversion results in deregulation of the CDK5 kinase: p25/CDK5 kinase displays an increased and altered tau phosphorylation in comparison to the p35/CDK5 kinase in vivo. Post-translationally, myristoylated. A proper myristoylation signal is essential for the proper distribution of p35. Phosphorylation at Ser-8 and Thr-138 by CDK5 prevents calpain-mediated proteolysis. In terms of processing, ubiquitinated, leading to its degradation: degradation of p35 by proteasome results in down-regulation of CDK5 activity. During this process, CDK5 phosphorylates p35 and induces its ubiquitination and subsequent degradation. Ubiquitinated by the CRL2(FEM1B) complex, which recognizes the -Gly-Leu-Asp-Arg C-degron at the C-terminus, leading to its degradation. In terms of tissue distribution, brain and neuron specific.

Its subcellular location is the cell membrane. The protein localises to the cell projection. It is found in the neuron projection. The protein resides in the nucleus. It localises to the cytoplasm. Its subcellular location is the perinuclear region. The protein localises to the perikaryon. Functionally, p35 is a neuron specific activator of CDK5. The complex p35/CDK5 is required for neurite outgrowth and cortical lamination. Involved in dendritic spine morphogenesis by mediating the EFNA1-EPHA4 signaling. Activator of TPKII. The complex p35/CDK5 participates in the regulation of the circadian clock by modulating the function of CLOCK protein: phosphorylates CLOCK at 'Thr-451' and 'Thr-461' and regulates the transcriptional activity of the CLOCK-BMAL1 heterodimer in association with altered stability and subcellular distribution. This chain is Cyclin-dependent kinase 5 activator 1 (Cdk5r1), found in Rattus norvegicus (Rat).